A 551-amino-acid chain; its full sequence is L-lactate permease (551 aa).

12 helical membrane passes run 13 to 33 (NIWLSSLIASLPILFFFFALI), 37 to 57 (LKGYVAASWTVVIALAVALLF), 69 to 89 (VVYGFFYGLWPIAWIIIAAVF), 131 to 151 (GAAGFGAPVAITAALLVGLGF), 159 to 179 (LCLIVNTAPVAFGAMGIPILV), 194 to 214 (MVGRQLPFLTIIVLFWIMAIM), 244 to 264 (FIGPELPDIISSLVSLVCLTL), 306 to 326 (FLFLTATVTLWSVPPFKALFA), 366 to 386 (FDWFSATGTAILFAALLSIVW), 405 to 425 (LALPIYSIGMVLAFAFISNYS), 438 to 458 (TGSAFTFFSPFLGWLGVFLTG), and 530 to 550 (IFTCMVGVITTLQAYVLTWMI).

This sequence belongs to the lactate permease family.

It is found in the cell inner membrane. It carries out the reaction (S)-lactate(in) + H(+)(in) = (S)-lactate(out) + H(+)(out). The enzyme catalyses (R)-lactate(in) + H(+)(in) = (R)-lactate(out) + H(+)(out). The catalysed reaction is glycolate(in) + H(+)(in) = glycolate(out) + H(+)(out). Its function is as follows. Uptake of L-lactate across the membrane. Can also transport D-lactate and glycolate. Seems to be driven by a proton motive force. The sequence is that of L-lactate permease (lldP) from Salmonella typhimurium (strain LT2 / SGSC1412 / ATCC 700720).